A 364-amino-acid polypeptide reads, in one-letter code: UDP-N-acetylglucosamine--N-acetylmuramyl-(pentapeptide) pyrophosphoryl-undecaprenol N-acetylglucosamine transferase (364 aa).

UDP-N-acetyl-alpha-D-glucosamine contacts are provided by residues 19–21, Asn131, Arg167, Ser195, Ile250, and Gln295; that span reads TGG.

Belongs to the glycosyltransferase 28 family. MurG subfamily.

It is found in the cell inner membrane. It carries out the reaction di-trans,octa-cis-undecaprenyl diphospho-N-acetyl-alpha-D-muramoyl-L-alanyl-D-glutamyl-meso-2,6-diaminopimeloyl-D-alanyl-D-alanine + UDP-N-acetyl-alpha-D-glucosamine = di-trans,octa-cis-undecaprenyl diphospho-[N-acetyl-alpha-D-glucosaminyl-(1-&gt;4)]-N-acetyl-alpha-D-muramoyl-L-alanyl-D-glutamyl-meso-2,6-diaminopimeloyl-D-alanyl-D-alanine + UDP + H(+). It participates in cell wall biogenesis; peptidoglycan biosynthesis. In terms of biological role, cell wall formation. Catalyzes the transfer of a GlcNAc subunit on undecaprenyl-pyrophosphoryl-MurNAc-pentapeptide (lipid intermediate I) to form undecaprenyl-pyrophosphoryl-MurNAc-(pentapeptide)GlcNAc (lipid intermediate II). This is UDP-N-acetylglucosamine--N-acetylmuramyl-(pentapeptide) pyrophosphoryl-undecaprenol N-acetylglucosamine transferase from Xylella fastidiosa (strain Temecula1 / ATCC 700964).